Here is a 236-residue protein sequence, read N- to C-terminus: Orotidine 5'-phosphate decarboxylase (236 aa).

Substrate is bound by residues aspartate 13, lysine 35, 62–71 (DLKFYDIPQT), threonine 123, arginine 184, glutamine 193, glycine 213, and arginine 214. The Proton donor role is filled by lysine 64.

Belongs to the OMP decarboxylase family. Type 1 subfamily. In terms of assembly, homodimer.

The catalysed reaction is orotidine 5'-phosphate + H(+) = UMP + CO2. It participates in pyrimidine metabolism; UMP biosynthesis via de novo pathway; UMP from orotate: step 2/2. Catalyzes the decarboxylation of orotidine 5'-monophosphate (OMP) to uridine 5'-monophosphate (UMP). The protein is Orotidine 5'-phosphate decarboxylase of Coxiella burnetii (strain CbuK_Q154) (Coxiella burnetii (strain Q154)).